The following is a 150-amino-acid chain: Arginine repressor (150 aa).

The protein belongs to the ArgR family.

It is found in the cytoplasm. It participates in amino-acid biosynthesis; L-arginine biosynthesis [regulation]. Functionally, regulates arginine biosynthesis genes. The chain is Arginine repressor from Staphylococcus epidermidis (strain ATCC 35984 / DSM 28319 / BCRC 17069 / CCUG 31568 / BM 3577 / RP62A).